The following is a 299-amino-acid chain: 4-diphosphocytidyl-2-C-methyl-D-erythritol kinase (299 aa).

The active site involves lysine 11. 94 to 104 (PQGGGLGGGSS) lines the ATP pocket. Aspartate 136 is a catalytic residue.

The protein belongs to the GHMP kinase family. IspE subfamily.

The enzyme catalyses 4-CDP-2-C-methyl-D-erythritol + ATP = 4-CDP-2-C-methyl-D-erythritol 2-phosphate + ADP + H(+). It participates in isoprenoid biosynthesis; isopentenyl diphosphate biosynthesis via DXP pathway; isopentenyl diphosphate from 1-deoxy-D-xylulose 5-phosphate: step 3/6. Its function is as follows. Catalyzes the phosphorylation of the position 2 hydroxy group of 4-diphosphocytidyl-2C-methyl-D-erythritol. The polypeptide is 4-diphosphocytidyl-2-C-methyl-D-erythritol kinase (Bordetella parapertussis (strain 12822 / ATCC BAA-587 / NCTC 13253)).